The chain runs to 165 residues: Mid1-interacting protein 1-like (165 aa).

Positions 46-67 are disordered; the sequence is DQESHASVSHNNNNNNEPSFPN.

The protein belongs to the SPOT14 family.

It is found in the nucleus. It localises to the cytoplasm. The protein localises to the cytoskeleton. In terms of biological role, involved in stabilization of microtubules. May play a role in the regulation of lipogenesis. The protein is Mid1-interacting protein 1-like of Danio rerio (Zebrafish).